The primary structure comprises 468 residues: ATP synthase subunit beta (468 aa).

Residue 155 to 162 (GGAGVGKT) participates in ATP binding.

The protein belongs to the ATPase alpha/beta chains family. In terms of assembly, F-type ATPases have 2 components, CF(1) - the catalytic core - and CF(0) - the membrane proton channel. CF(1) has five subunits: alpha(3), beta(3), gamma(1), delta(1), epsilon(1). CF(0) has three main subunits: a(1), b(2) and c(9-12). The alpha and beta chains form an alternating ring which encloses part of the gamma chain. CF(1) is attached to CF(0) by a central stalk formed by the gamma and epsilon chains, while a peripheral stalk is formed by the delta and b chains.

It localises to the cell membrane. The catalysed reaction is ATP + H2O + 4 H(+)(in) = ADP + phosphate + 5 H(+)(out). Functionally, produces ATP from ADP in the presence of a proton gradient across the membrane. The catalytic sites are hosted primarily by the beta subunits. The chain is ATP synthase subunit beta from Bacillus cereus (strain B4264).